The primary structure comprises 697 residues: Elongation factor G (697 aa).

The tr-type G domain maps to 8–290 (ERYRNIGIMA…AVLSYMPSPV (283 aa)). Residues 17–24 (AHIDAGKT), 88–92 (DTPGH), and 142–145 (NKMD) each bind GTP.

The protein belongs to the TRAFAC class translation factor GTPase superfamily. Classic translation factor GTPase family. EF-G/EF-2 subfamily.

The protein resides in the cytoplasm. Its function is as follows. Catalyzes the GTP-dependent ribosomal translocation step during translation elongation. During this step, the ribosome changes from the pre-translocational (PRE) to the post-translocational (POST) state as the newly formed A-site-bound peptidyl-tRNA and P-site-bound deacylated tRNA move to the P and E sites, respectively. Catalyzes the coordinated movement of the two tRNA molecules, the mRNA and conformational changes in the ribosome. The protein is Elongation factor G of Nitrosococcus oceani (strain ATCC 19707 / BCRC 17464 / JCM 30415 / NCIMB 11848 / C-107).